A 78-amino-acid chain; its full sequence is Serine--glyoxylate aminotransferase (78 aa).

Belongs to the class-V pyridoxal-phosphate-dependent aminotransferase family. As to quaternary structure, homodimer. It depends on pyridoxal 5'-phosphate as a cofactor. As to expression, expressed in leaves but not in root tissue or seedlings.

Its subcellular location is the peroxisome. It catalyses the reaction glyoxylate + L-serine = 3-hydroxypyruvate + glycine. It carries out the reaction glyoxylate + L-alanine = glycine + pyruvate. With respect to regulation, inhibited by aminooxyacetate. This Triticum aestivum (Wheat) protein is Serine--glyoxylate aminotransferase.